A 470-amino-acid chain; its full sequence is Pancreatic lipase-related protein 2 (470 aa).

Residues 1–18 form the signal peptide; the sequence is MMLFVWTTGLLLLATARG. The cysteines at positions 22 and 28 are disulfide-linked. The interval 94 to 106 is required for galactolipase activity; it reads IHGFIDNGEKDWL. C110 and C121 are disulfide-bonded. S172 acts as the Nucleophile in catalysis. The active-site Charge relay system is D196. Positions 207, 210, 212, and 215 each coordinate Ca(2+). A disulfide bond links C257 and C281. The segment at 258–280 is required for galactolipase activity; the sequence is EKNIISTIVDVNGFLEGITSLAA. The active-site Charge relay system is H283. 2 cysteine pairs are disulfide-bonded: C305–C316 and C319–C324. N-linked (GlcNAc...) asparagine glycans are attached at residues N354 and N429. The PLAT domain occupies 358–470; sequence WRYKVSVTLS…EDVLQSLSPC (113 aa). An intrachain disulfide couples C454 to C470.

Belongs to the AB hydrolase superfamily. Lipase family. In terms of tissue distribution, pancreas.

The protein localises to the secreted. It localises to the zymogen granule membrane. The protein resides in the cell projection. It is found in the neuron projection. The enzyme catalyses a triacylglycerol + H2O = a diacylglycerol + a fatty acid + H(+). It catalyses the reaction a 1,2-diacyl-3-O-(beta-D-galactosyl)-sn-glycerol + 2 H2O = 3-beta-D-galactosyl-sn-glycerol + 2 a fatty acid + 2 H(+). It carries out the reaction 1,2,3-tri-(9Z-octadecenoyl)-glycerol + H2O = di-(9Z)-octadecenoylglycerol + (9Z)-octadecenoate + H(+). The catalysed reaction is di-(9Z)-octadecenoylglycerol + H2O = (9Z-octadecenoyl)-glycerol + (9Z)-octadecenoate + H(+). The enzyme catalyses (9Z-octadecenoyl)-glycerol + H2O = glycerol + (9Z)-octadecenoate + H(+). It catalyses the reaction 1-(9Z-octadecenoyl)-glycerol + H2O = glycerol + (9Z)-octadecenoate + H(+). It carries out the reaction 1,2,3-tripropanoylglycerol + H2O = dipropanoylglycerol + propanoate + H(+). The catalysed reaction is 1,2,3-tributanoylglycerol + H2O = dibutanoylglycerol + butanoate + H(+). The enzyme catalyses 1,2,3-trioctanoylglycerol + H2O = dioctanoylglycerol + octanoate + H(+). It catalyses the reaction 1,2-didecanoylglycerol + H2O = decanoylglycerol + decanoate + H(+). It carries out the reaction long chain 1,2-diacyl-3-O-beta-D-galactosyl-sn-glycerol + H2O = long chain acyl-3-O-beta-D-galactosyl-sn-glycerol + a fatty acid + H(+). The catalysed reaction is 1,2-dioctanoyl-3-O-beta-D-galactosyl-sn-glycerol + H2O = octanoyl-3-(beta-D-galactosyl)-sn-glycerol + octanoate + H(+). The enzyme catalyses 1,2-didodecanoyl-3-beta-D-galactosyl-sn-glycerol + H2O = dodecanoyl-3-beta-D-galactosyl-sn-glycerol + dodecanoate + H(+). It catalyses the reaction 1-beta-D-galactosyl-2,3-didodecanoyl-sn-glycerol + H2O = 1-beta-D-galactosyl-dodecanoyl-sn-glycerol + dodecanoate + H(+). It carries out the reaction a 1,2-diacyl-3-O-[alpha-D-galactosyl-(1-&gt;6)-beta-D-galactosyl]-sn-glycerol + H2O = acyl-3-O-[alpha-D-galactosyl-(1-&gt;6)-beta-D-galactosyl]-sn-glycerol + a fatty acid + H(+). The catalysed reaction is long chain 1,2-diacyl-3-O-[alpha-D-galactosyl-(1-&gt;6)-beta-D-galactosyl]-sn-glycerol + H2O = long chain acyl-3-O-[alpha-D-galactosyl-(1-&gt;6)-beta-D-galactosyl]-sn-glycerol + a fatty acid + H(+). The enzyme catalyses 1,2-dioctanoyl-3-O-[alpha-D-galactosyl-(1-&gt;6)-beta-D-galactosyl]-sn-glycerol + H2O = octanoyl-3-O-[alpha-D-galactosyl-(1-&gt;6)-beta-D-galactosyl]-sn-glycerol + octanoate + H(+). It catalyses the reaction 1,2-didodecanoyl-3-O-[alpha-D-galactosyl-(1-&gt;6)-beta-D-galactosyl]-sn-glycerol + H2O = dodecanoyl-3-O-[alpha-D-galactosyl-(1-&gt;6)-beta-D-galactosyl]-sn-glycerol + dodecanoate + H(+). It carries out the reaction a 1,2-diacyl-sn-glycero-3-phosphocholine + H2O = a monoacyl-sn-glycero-3-phosphocholine + a fatty acid + H(+). It participates in glycerolipid metabolism; triacylglycerol degradation. Its pathway is glycolipid metabolism. Its activity is regulated as follows. Triacylglycerol lipase activity is inhibited by increasing bile salts concentrations and not reactivated by CLPS. In terms of biological role, lipase that primarily hydrolyzes triglycerides and galactosylglycerides. In neonates, may play a major role in pancreatic digestion of dietary fats such as milk fat globules enriched in long-chain triglycerides. Hydrolyzes short-, medium- and long-chain fatty acyls in triglycerides without apparent positional specificity. Can completely deacylate triacylglycerols. When the liver matures and bile salt synthesis increases, likely functions mainly as a galactolipase and monoacylglycerol lipase. Hydrolyzes monogalactosyldiglycerols (MGDG) and digalactosyldiacylglycerols (DGDG) present in a plant-based diet, releasing long-chain polyunsaturated fatty acids. Hydrolyzes medium- and long-chain fatty acyls in galactolipids. May act together with LIPF to hydrolyze partially digested triglycerides. Hydrolyzes long-chain monoglycerides with high efficiency. In cytotoxic T cells, contributes to perforin-dependent cell lysis, but is unlikely to mediate direct cytotoxicity. Also has low phospholipase activity. In neurons, required for the localization of the phospholipid 1-oleoyl-2-palmitoyl-PC (OPPC) to neurite tips through acyl chain remodeling of membrane phospholipids. The resulting OPPC-rich lipid membrane domain recruits the t-SNARE protein STX4 by selectively interacting with the STX4 transmembrane domain and this promotes surface expression of the dopamine transporter SLC6A3/DAT at neurite tips by facilitating fusion of SLC6A3-containing transport vesicles with the plasma membrane. The polypeptide is Pancreatic lipase-related protein 2 (Myocastor coypus (Coypu)).